The primary structure comprises 401 residues: O-methyltransferase SAT18 (401 aa).

S-adenosyl-L-methionine is bound at residue Asp-249. His-300 functions as the Proton acceptor in the catalytic mechanism.

This sequence belongs to the class I-like SAM-binding methyltransferase superfamily. Cation-independent O-methyltransferase family.

It functions in the pathway mycotoxin biosynthesis. In terms of biological role, O-methyltransferase; part of the satratoxin SC3 cluster involved in the biosynthesis of satratoxins, trichothecene mycotoxins that are associated with human food poisonings. Satratoxins are suggested to be made by products of multiple gene clusters (SC1, SC2 and SC3) that encode 21 proteins in all, including polyketide synthases, acetyltransferases, and other enzymes expected to modify the trichothecene skeleton. SC1 encodes 10 proteins, SAT1 to SAT10. The largest are SAT8, which encodes a putative polyketide synthase (PKS) with a conventional non-reducing architecture, and SAT10, a putative protein containing four ankyrin repeats and thus may be involved in protein scaffolding. The putative short-chain reductase SAT3 may assist the PKS in some capacity. SAT6 contains a secretory lipase domain and acts probably as a trichothecene esterase. SAT5 encodes a putative acetyltransferase, and so, with SAT6, may affect endogenous protection from toxicity. The probable transcription factor SAT9 may regulate the expression of the SC1 cluster. SC2 encodes proteins SAT11 to SAT16, the largest of which encodes the putative reducing PKS SAT13. SAT11 is a cytochrome P450 monooxygenase, while SAT14 and SAT16 are probable acetyltransferases. The SC2 cluster may be regulated by the transcription factor SAT15. SC3 is a small cluster that encodes 5 proteins, SAT17 to SAT21. SAT21 is a putative MFS-type transporter which may have a role in exporting secondary metabolites. The four other proteins putatively encoded in SC3 include the taurine hydroxylase-like protein SAT17, the O-methyltransferase SAT18, the acetyltransferase SAT19, and the Cys6-type zinc finger SAT20, the latter being probably involved in regulation of SC3 expression. The chain is O-methyltransferase SAT18 from Stachybotrys chartarum (strain CBS 109288 / IBT 7711) (Toxic black mold).